Consider the following 452-residue polypeptide: Bifunctional protein GlmU (452 aa).

The segment at 1 to 226 (MSLAVVILAA…GWEVDGVNDR (226 aa)) is pyrophosphorylase. Residues 8-11 (LAAG), Lys-22, Gln-73, 78-79 (GT), 99-101 (YGD), Gly-136, Glu-151, Asn-166, and Asn-224 contribute to the UDP-N-acetyl-alpha-D-glucosamine site. Residue Asp-101 participates in Mg(2+) binding. Residue Asn-224 participates in Mg(2+) binding. Residues 227 to 247 (VQLARLERIYQQAQAETLMRD) form a linker region. Residues 248–452 (GVTLLDPSRL…VANWQRPKKG (205 aa)) form an N-acetyltransferase region. Arg-330 and Lys-348 together coordinate UDP-N-acetyl-alpha-D-glucosamine. His-360 acts as the Proton acceptor in catalysis. UDP-N-acetyl-alpha-D-glucosamine-binding residues include Tyr-363 and Asn-374. Acetyl-CoA is bound by residues Ala-377, 383-384 (NY), Ser-402, Ala-420, and Arg-437.

It in the N-terminal section; belongs to the N-acetylglucosamine-1-phosphate uridyltransferase family. In the C-terminal section; belongs to the transferase hexapeptide repeat family. As to quaternary structure, homotrimer. Mg(2+) serves as cofactor.

Its subcellular location is the cytoplasm. It catalyses the reaction alpha-D-glucosamine 1-phosphate + acetyl-CoA = N-acetyl-alpha-D-glucosamine 1-phosphate + CoA + H(+). It carries out the reaction N-acetyl-alpha-D-glucosamine 1-phosphate + UTP + H(+) = UDP-N-acetyl-alpha-D-glucosamine + diphosphate. The protein operates within nucleotide-sugar biosynthesis; UDP-N-acetyl-alpha-D-glucosamine biosynthesis; N-acetyl-alpha-D-glucosamine 1-phosphate from alpha-D-glucosamine 6-phosphate (route II): step 2/2. It participates in nucleotide-sugar biosynthesis; UDP-N-acetyl-alpha-D-glucosamine biosynthesis; UDP-N-acetyl-alpha-D-glucosamine from N-acetyl-alpha-D-glucosamine 1-phosphate: step 1/1. It functions in the pathway bacterial outer membrane biogenesis; LPS lipid A biosynthesis. Catalyzes the last two sequential reactions in the de novo biosynthetic pathway for UDP-N-acetylglucosamine (UDP-GlcNAc). The C-terminal domain catalyzes the transfer of acetyl group from acetyl coenzyme A to glucosamine-1-phosphate (GlcN-1-P) to produce N-acetylglucosamine-1-phosphate (GlcNAc-1-P), which is converted into UDP-GlcNAc by the transfer of uridine 5-monophosphate (from uridine 5-triphosphate), a reaction catalyzed by the N-terminal domain. In Alcanivorax borkumensis (strain ATCC 700651 / DSM 11573 / NCIMB 13689 / SK2), this protein is Bifunctional protein GlmU.